The sequence spans 673 residues: Beta-galactosidase GalA (673 aa).

Residue R105 participates in substrate binding. A Zn(2+)-binding site is contributed by C109. A substrate-binding site is contributed by N143. E144 functions as the Proton donor in the catalytic mechanism. Zn(2+) contacts are provided by C149, C151, and C154. The Nucleophile role is filled by E308. Substrate is bound by residues W316 and 356–359 (EKFH).

It belongs to the glycosyl hydrolase 42 family. Homodimer.

The catalysed reaction is Hydrolysis of terminal non-reducing beta-D-galactose residues in beta-D-galactosides.. Its activity is regulated as follows. Inhibited by hydrolysis end products D-galactose and D-glucose. The hydrolysis of o-nitrophenyl-beta-D-galactopyranoside (ONPG) is slightly activated by monovalent ions, Na(+) and K(+). Concentrations of these ions in the range of 1-100 mM exert the stimulating effects. The presence of 1 mM Mn(2+) together with the presence of 10 mM Na(+) slightly stimulates the activity, while presence of 10 mM Mn(2+) inhibits the activity by about 40%. Its function is as follows. Catalyzes the hydrolysis of lactose to its constituent monosaccharides glucose and galactose. Possesses a low level of transgalactosylation activity for the production of galacto-oligosaccharides (GOS) from lactose. This is Beta-galactosidase GalA from Bacillus licheniformis (strain ATCC 14580 / DSM 13 / JCM 2505 / CCUG 7422 / NBRC 12200 / NCIMB 9375 / NCTC 10341 / NRRL NRS-1264 / Gibson 46).